The following is a 127-amino-acid chain: Holo-[acyl-carrier-protein] synthase (127 aa).

The Mg(2+) site is built by aspartate 8 and glutamate 56.

Belongs to the P-Pant transferase superfamily. AcpS family. Mg(2+) serves as cofactor.

It localises to the cytoplasm. The catalysed reaction is apo-[ACP] + CoA = holo-[ACP] + adenosine 3',5'-bisphosphate + H(+). Functionally, transfers the 4'-phosphopantetheine moiety from coenzyme A to a Ser of acyl-carrier-protein. The protein is Holo-[acyl-carrier-protein] synthase of Cytophaga hutchinsonii (strain ATCC 33406 / DSM 1761 / CIP 103989 / NBRC 15051 / NCIMB 9469 / D465).